The sequence spans 421 residues: Hemagglutinin-esterase (421 aa).

A signal peptide spans 1–16 (MFLLPRFILVSCIIGS). Positions 7 to 127 (FILVSCIIGS…SNDIWMQNKG (121 aa)) are esterase domain 1. Topologically, residues 17 to 392 (LGFDNPPTNV…PICVYDPLPL (376 aa)) are virion surface. Catalysis depends on Ser40, which acts as the Nucleophile. A disulfide bond links Cys44 and Cys65. N-linked (GlcNAc...) asparagine; by host glycans are attached at residues Asn54, Asn89, Asn153, Asn236, and Asn301. 3 disulfide bridges follow: Cys113-Cys162, Cys197-Cys276, and Cys205-Cys249. The tract at residues 128 to 266 (LFYTQVYKNM…GNYLAISNEL (139 aa)) is receptor binding. The esterase domain 2 stretch occupies residues 267–379 (LLTVPTKAIC…RCPTAADINT (113 aa)). An intrachain disulfide couples Cys307 to Cys312. An N-linked (GlcNAc...) asparagine; by host glycan is attached at Asn316. Catalysis depends on charge relay system residues Asp326 and His329. A disulfide bridge links Cys347 with Cys371. Residue Asn358 is glycosylated (N-linked (GlcNAc...) asparagine; by host). A helical transmembrane segment spans residues 393 to 413 (ILLGILLGVAVIIIVVLLLYF). The Intravirion portion of the chain corresponds to 414 to 421 (MVENGTRL). The N-linked (GlcNAc...) asparagine; by host glycan is linked to Asn417.

Belongs to the influenza type C/coronaviruses hemagglutinin-esterase family. Homodimer; disulfide-linked. Forms a complex with the M protein in the pre-Golgi. Associates then with S-M complex to form a ternary complex S-M-HE. N-glycosylated in the host RER.

Its subcellular location is the virion membrane. It localises to the host cell membrane. It catalyses the reaction N-acetyl-9-O-acetylneuraminate + H2O = N-acetylneuraminate + acetate + H(+). The enzyme catalyses N-acetyl-4-O-acetylneuraminate + H2O = N-acetylneuraminate + acetate + H(+). Functionally, structural protein that makes short spikes at the surface of the virus. Contains receptor binding and receptor-destroying activities. Mediates de-O-acetylation of N-acetyl-4-O-acetylneuraminic acid, which is probably the receptor determinant recognized by the virus on the surface of erythrocytes and susceptible cells. This receptor-destroying activity is important for virus release as it probably helps preventing self-aggregation and ensures the efficient spread of the progeny virus from cell to cell. May serve as a secondary viral attachment protein for initiating infection, the spike protein being the major one. May become a target for both the humoral and the cellular branches of the immune system. The sequence is that of Hemagglutinin-esterase from Bos taurus (Bovine).